A 140-amino-acid polypeptide reads, in one-letter code: Actin-depolymerizing factor 8 (140 aa).

Ser-6 is subject to Phosphoserine. One can recognise an ADF-H domain in the interval Gly-7–Asn-139.

This sequence belongs to the actin-binding proteins ADF family. Expressed in the root trichoblast cells and developed root hairs.

The protein resides in the cytoplasm. It localises to the cytoskeleton. In terms of biological role, actin-depolymerizing protein. Severs actin filaments (F-actin) and binds to actin monomers. The polypeptide is Actin-depolymerizing factor 8 (ADF8) (Arabidopsis thaliana (Mouse-ear cress)).